We begin with the raw amino-acid sequence, 274 residues long: Small nuclear ribonucleoprotein-associated protein B (274 aa).

The region spanning 5–85 is the Sm domain; that stretch reads PKSSKMLQYI…VVSMSVEAPP (81 aa). A disordered region spans residues 148-274; that stretch reads PGGGVPPPMG…PMGRGGFQRK (127 aa). Residues 162 to 171 form repeat 1; the sequence is PPQGFPPGGP. The segment at 162–265 is 6 X 10 AA repeats of P-P-Q-G-F-P-P-G-G-P; sequence PPQGFPPGGP…PPQGFPPGGP (104 aa). Over residues 173-187 the composition is skewed to low complexity; it reads PQGAFNNNPNNNNGG. 5 consecutive repeat copies span residues 188-197, 204-213, 225-234, 241-250, and 256-265. Positions 216-226 are enriched in low complexity; that stretch reads GPNLNNGNMPP. Residues 265-274 show a composition bias toward gly residues; sequence PMGRGGFQRK.

The protein belongs to the snRNP SmB/SmN family.

It localises to the cytoplasm. The protein localises to the cytosol. The protein resides in the nucleus. In terms of biological role, plays a role in pre-mRNA splicing as a core component of the spliceosomal U1, U2, U4 and U5 small nuclear ribonucleoproteins (snRNPs), the building blocks of the spliceosome. The protein is Small nuclear ribonucleoprotein-associated protein B (snrpb) of Dictyostelium discoideum (Social amoeba).